The primary structure comprises 117 residues: Cuticle protein CP1246 (117 aa).

4 repeat units span residues 1–17, 26–43, 67–84, and 93–110.

Calcified shell.

This is Cuticle protein CP1246 from Cancer pagurus (Rock crab).